A 492-amino-acid chain; its full sequence is uncharacterized protein (492 aa).

It belongs to the FGGY kinase family.

This is an uncharacterized protein from Escherichia coli (strain K12).